Reading from the N-terminus, the 336-residue chain is Heme A synthase (336 aa).

Helical transmembrane passes span 12 to 32, 97 to 117, 130 to 150, 161 to 181, 194 to 214, 256 to 276, 285 to 305, and 310 to 330; these read LKLW…VGGL, LLAR…TLYF, IFFL…SGLI, SIHL…ILDI, LFLL…AFLS, FLHR…NFIY, YVLF…ITLI, and ITYA…YFLI. His258 is a heme binding site. Residue His316 coordinates heme.

The protein belongs to the COX15/CtaA family. Type 2 subfamily. In terms of assembly, interacts with CtaB. It depends on heme b as a cofactor.

The protein resides in the cell membrane. The catalysed reaction is Fe(II)-heme o + 2 A + H2O = Fe(II)-heme a + 2 AH2. It functions in the pathway porphyrin-containing compound metabolism; heme A biosynthesis; heme A from heme O: step 1/1. Catalyzes the conversion of heme O to heme A by two successive hydroxylations of the methyl group at C8. The first hydroxylation forms heme I, the second hydroxylation results in an unstable dihydroxymethyl group, which spontaneously dehydrates, resulting in the formyl group of heme A. The chain is Heme A synthase from Pelagibacter ubique (strain HTCC1062).